A 72-amino-acid polypeptide reads, in one-letter code: MANYQNASNRNSSNKLVAPGAQAAIDQMKFEIASEFGVNLGPDATARANGSVGGEITKRLVQLAEQNLGGKY.

Belongs to the alpha/beta-type SASP family.

Its function is as follows. SASP are bound to spore DNA. They are double-stranded DNA-binding proteins that cause DNA to change to an a-like conformation. They protect the DNA backbone from chemical and enzymatic cleavage and are thus involved in dormant spore's high resistance to UV light. The protein is Small, acid-soluble spore protein C (sasP-C) of Priestia megaterium (Bacillus megaterium).